A 536-amino-acid chain; its full sequence is DEAD-box ATP-dependent RNA helicase 41 (536 aa).

Positions 1–10 (MEQEENHSAD) are enriched in basic and acidic residues. The segment at 1 to 25 (MEQEENHSADHLSAQPGNGNELEES) is disordered. Residues 40 to 69 (GEPRCVICGRYGEYICDQTDDDICSVECKT) form an HIT-type zinc finger. The short motif at 137 to 165 (MCFSSSGLPEKLVLNLEAAGYVMPTPVQM) is the Q motif element. Residues 168-344 (IPSSICNRSL…NSLAKNAIHI (177 aa)) form the Helicase ATP-binding domain. Residue 181-188 (ADTGSGKT) participates in ATP binding. Positions 293 to 296 (DEVD) match the DEAD box motif. The Helicase C-terminal domain occupies 355-518 (SVKQVVIWVE…PIPRELANSK (164 aa)).

This sequence belongs to the DEAD box helicase family. DDX59 subfamily.

It catalyses the reaction ATP + H2O = ADP + phosphate + H(+). The sequence is that of DEAD-box ATP-dependent RNA helicase 41 from Oryza sativa subsp. japonica (Rice).